The sequence spans 469 residues: 3-isopropylmalate dehydratase large subunit (469 aa).

[4Fe-4S] cluster-binding residues include cysteine 349, cysteine 410, and cysteine 413.

Belongs to the aconitase/IPM isomerase family. LeuC type 1 subfamily. In terms of assembly, heterodimer of LeuC and LeuD. [4Fe-4S] cluster serves as cofactor.

The catalysed reaction is (2R,3S)-3-isopropylmalate = (2S)-2-isopropylmalate. It functions in the pathway amino-acid biosynthesis; L-leucine biosynthesis; L-leucine from 3-methyl-2-oxobutanoate: step 2/4. Functionally, catalyzes the isomerization between 2-isopropylmalate and 3-isopropylmalate, via the formation of 2-isopropylmaleate. The chain is 3-isopropylmalate dehydratase large subunit from Neisseria gonorrhoeae (strain NCCP11945).